Consider the following 284-residue polypeptide: Mevalonate kinase (284 aa).

86-96 provides a ligand contact to ATP; it reads PIGSGLGSSAA. D137 (proton acceptor) is an active-site residue.

Belongs to the GHMP kinase family. Mevalonate kinase subfamily. In terms of assembly, homodimer. Requires Mg(2+) as cofactor.

The protein resides in the cytoplasm. It carries out the reaction (R)-mevalonate + ATP = (R)-5-phosphomevalonate + ADP + H(+). It functions in the pathway isoprenoid biosynthesis; isopentenyl diphosphate biosynthesis via mevalonate pathway; isopentenyl diphosphate from (R)-mevalonate: step 1/3. Functionally, catalyzes the phosphorylation of (R)-mevalonate (MVA) to (R)-mevalonate 5-phosphate (MVAP). Functions in the mevalonate (MVA) pathway leading to isopentenyl diphosphate (IPP), a key precursor for the biosynthesis of isoprenoid compounds such as archaeal membrane lipids. This chain is Mevalonate kinase, found in Archaeoglobus fulgidus (strain ATCC 49558 / DSM 4304 / JCM 9628 / NBRC 100126 / VC-16).